The primary structure comprises 351 residues: Glycerol-3-phosphate dehydrogenase [NAD(P)+] (351 aa).

Positions 12, 13, 33, and 114 each coordinate NADPH. Lysine 114, glycine 145, and serine 147 together coordinate sn-glycerol 3-phosphate. Alanine 149 is an NADPH binding site. The sn-glycerol 3-phosphate site is built by lysine 200, aspartate 253, serine 263, arginine 264, and asparagine 265. The active-site Proton acceptor is the lysine 200. Residue arginine 264 participates in NADPH binding. 2 residues coordinate NADPH: valine 288 and glutamate 290.

This sequence belongs to the NAD-dependent glycerol-3-phosphate dehydrogenase family.

Its subcellular location is the cytoplasm. It catalyses the reaction sn-glycerol 3-phosphate + NAD(+) = dihydroxyacetone phosphate + NADH + H(+). It carries out the reaction sn-glycerol 3-phosphate + NADP(+) = dihydroxyacetone phosphate + NADPH + H(+). It functions in the pathway membrane lipid metabolism; glycerophospholipid metabolism. Its function is as follows. Catalyzes the reduction of the glycolytic intermediate dihydroxyacetone phosphate (DHAP) to sn-glycerol 3-phosphate (G3P), the key precursor for phospholipid synthesis. The chain is Glycerol-3-phosphate dehydrogenase [NAD(P)+] from Lacticaseibacillus paracasei (strain ATCC 334 / BCRC 17002 / CCUG 31169 / CIP 107868 / KCTC 3260 / NRRL B-441) (Lactobacillus paracasei).